The primary structure comprises 365 residues: MAELRMEHIYKFYDQKEPAVDDFNLHIADKEFIVFVGPSGCGKSTTLRMVAGLEEISKGDFYIEGKRVNDVAPKDRDIAMVFQNYALYPHMTVYDNIAFGLKLRKMPKPEIKKRVEEAAKILGLEEYLHRKPKALSGGQRQRVALGRAIVRDAKVFLMDEPLSNLDAKLRVQMRAEIIKLHQRLQTTTIYVTHDQTEALTMATRIVVMKDGKIQQIGTPKDVYEFPENVFVGGFIGSPAMNFFKGKLTDGLIKIGSAALTVPEGKMKVLREKGYIGKEVIFGIRPEDIHDELIVVESYKNSSIKAKINVAELLGSEIMIYSQIDNQDFIARIDARLDIQSGDELTVAFDMNKGHFFDSETEVRIR.

In terms of domain architecture, ABC transporter spans 4-235 (LRMEHIYKFY…PENVFVGGFI (232 aa)). Residue 37 to 44 (GPSGCGKS) participates in ATP binding.

Belongs to the ABC transporter superfamily. As to quaternary structure, the complex involved in maltodextrin import is composed of two ATP-binding proteins (MsmX), two transmembrane proteins (MdxF and MdxG) and a solute-binding protein (MdxE). The complex involved in arabinooligosaccharides uptake is composed of two ATP-binding proteins (MsmX), two transmembrane proteins (AraP and AraQ) and a solute-binding protein (AraN). The complex involved in galactooligosaccharides uptake is composed of two ATP-binding proteins (MsmX), two transmembrane proteins (GanP and GanQ) and a solute-binding protein (GanS). The complex involved in melibiose, raffinose and stachyose import is composed of two ATP-binding proteins (MsmX), two transmembrane proteins (MelC and MelD) and a solute-binding protein (MelE). The complex involved in polygalacturonan and rhamnogalacturonan type I uptake is probably composed of two ATP-binding proteins (MsmX), two transmembrane proteins (YtcP and YteP) and a solute-binding protein (YtcQ).

The protein resides in the cell membrane. Functionally, required to energize different ABC-type saccharide transporters. Part of the MdxEFG-MsmX ABC transporter complex involved in maltodextrin import, of the AraNPQ-MsmX complex involved in arabinooligosaccharides import, of the GanPQS-MsmX complex involved in galactooligosaccharides import, and of the MelEDC-MsmX complex involved in melibiose, raffinose and stachyose import. Is probably also part of the ABC transporter complex YtcQP-YteP-MsmX involved in polygalacturonan and rhamnogalacturonan type I import during pectin degradation. Responsible for energy coupling to the transport system. This Bacillus subtilis (strain 168) protein is Oligosaccharides import ATP-binding protein MsmX (msmX).